Reading from the N-terminus, the 947-residue chain is Protein translocase subunit SecA 1 (947 aa).

ATP is bound by residues glutamine 83, 101-105 (GEGKT), and aspartate 490. The disordered stretch occupies residues 860–947 (AKAQEQTGQG…KTSKPTRRRG (88 aa)). Residues 925 to 934 (TRRERREAAR) are compositionally biased toward basic and acidic residues. Positions 935–947 (KQAKTSKPTRRRG) are enriched in basic residues.

Belongs to the SecA family. In terms of assembly, monomer and homodimer. Part of the essential Sec protein translocation apparatus which comprises SecA, SecYEG and auxiliary proteins SecDF. Other proteins may also be involved.

It is found in the cell membrane. The protein resides in the cytoplasm. The enzyme catalyses ATP + H2O + cellular proteinSide 1 = ADP + phosphate + cellular proteinSide 2.. In terms of biological role, part of the Sec protein translocase complex. Interacts with the SecYEG preprotein conducting channel. Has a central role in coupling the hydrolysis of ATP to the transfer of proteins into and across the cell membrane, serving as an ATP-driven molecular motor driving the stepwise translocation of polypeptide chains across the membrane. The sequence is that of Protein translocase subunit SecA 1 from Mycobacterium sp. (strain KMS).